The sequence spans 327 residues: PDZ and LIM domain protein 1 (327 aa).

Thr-2 carries the post-translational modification N-acetylthreonine. Residues 3-85 (TQQIVLQGPG…NMTLTVSRSE (83 aa)) enclose the PDZ domain. Ser-90 and Ser-130 each carry phosphoserine. Tyr-142 carries the post-translational modification Phosphotyrosine. The tract at residues 161–184 (VESKTSASGEEANSRPVVQPHPSG) is disordered. Positions 256 to 315 (PICDKCGTGIVGVFVKLRDHHRHPECYVCTDCGINLKQKGHFFVEDQIYCEKHARERVTP) constitute an LIM zinc-binding domain. Zn(2+) is bound by residues Cys-258, Cys-261, His-278, Cys-281, Cys-284, Cys-287, Cys-305, and His-308. Residue Thr-314 is modified to Phosphothreonine. At Tyr-319 the chain carries Phosphotyrosine.

In terms of assembly, interacts with ACTN1, ACTN2 and ACTN4. Interacts with PDLIM4. In terms of tissue distribution, expressed in heart, lung, spleen, testis and skeletal muscle.

The protein localises to the cytoplasm. The protein resides in the cytoskeleton. It is found in the myofibril. It localises to the sarcomere. Its subcellular location is the z line. Its function is as follows. Cytoskeletal protein that may act as an adapter that brings other proteins (like kinases) to the cytoskeleton. Involved in assembly, disassembly and directioning of stress fibers in fibroblasts. Required for the localization of ACTN1 and PALLD to stress fibers. Required for cell migration and in maintaining cell polarity of fibroblasts. The sequence is that of PDZ and LIM domain protein 1 (Pdlim1) from Mus musculus (Mouse).